We begin with the raw amino-acid sequence, 739 residues long: MLKKIVTALGMSGMLLASNSAIADDKNTETATPQSVDLSPLRNLNKLDSPMDKDYNYHQAFKKLDPEQLKKDMQDLLTQSQDWWPADFGNYGPFFIRLSWHDAGTYRIYDGRGGANRGQQRFSPLNSWPDNVNLDKARQLLWPIKQKYGDAVSWSDLIVLAGTVSLESMGMKPIGFAFGREDDWQGDDTNWGLSPEEIMSSNVRDGKLAPAYAATQMGLIYVNPEGPDGKPDIKGAASEIRQAFRAMGMTDKETVALIAGGHTFGKTHGAVPEDKVKEAIGPAPDKAPIEQQGLGWHNSYGTGNGDDTMGSGLEGSWTSTPTFWNHDFLHNLYNLNWKKTLSPAGAHQWTPTNAKPENMVPDAHKLGVKHKPIMFTTDLALKEDDGFNKYTQEFYNNPEEFKEEFAKAWFKLTHRDMGPKSRYIGPWIPEQNFIWQDPVPAADYKQVSTQDIAQLKQDIIDSGLTNQQLIKTAWDSASTYRKTDYRGGSNGARIALAPEKDWQMNEPAKLEVVLAKLKEIQTNFNNSKTDGTKVSLADLIVLGGNVGVEQAAKQAGYNIQIPFVPGRTDATQAQTDIESFNYLKTKSDGFINYTDGSVSADKLPQALVEKASMLDLNIPEMTVLVGGMRALNVNYDNSQEGVLTTTPGQLNNSFFVNLLDMSTQWKKSDKKDGEYIGIGRKTGKQKWTASPVDLIFGSNSELKAVAQVYAENGNEQKFVNDFAKAWHKVMMLGRFDVQQ.

A signal peptide spans 1 to 23 (MLKKIVTALGMSGMLLASNSAIA). Positions 100–221 (WHDAGTYRIY…YAATQMGLIY (122 aa)) form a cross-link, tryptophyl-tyrosyl-methioninium (Trp-Tyr) (with M-247). The active-site Proton acceptor is the histidine 101. Residues 221 to 247 (YVNPEGPDGKPDIKGAASEIRQAFRAM) constitute a cross-link (tryptophyl-tyrosyl-methioninium (Tyr-Met) (with W-100)). Histidine 262 is a binding site for heme b.

It belongs to the peroxidase family. Peroxidase/catalase subfamily. Homodimer or homotetramer. Heme b serves as cofactor. Formation of the three residue Trp-Tyr-Met cross-link is important for the catalase, but not the peroxidase activity of the enzyme.

It carries out the reaction H2O2 + AH2 = A + 2 H2O. It catalyses the reaction 2 H2O2 = O2 + 2 H2O. Bifunctional enzyme with both catalase and broad-spectrum peroxidase activity. This chain is Catalase-peroxidase, found in Francisella tularensis subsp. novicida (strain U112).